The following is a 1082-amino-acid chain: RNA-directed RNA polymerase (1082 aa).

The RdRp catalytic domain maps to 498–670; that stretch reads LSYGDVTRYL…ALASLTGCEI (173 aa).

Belongs to the reoviridae RNA-directed RNA polymerase family. As to quaternary structure, interacts with VP3 (Potential). Interacts with VP2; this interaction activates VP1. Interacts with NSP5; this interaction is probably necessary for the formation of functional virus factories. Interacts with NSP2; this interaction is weak. It depends on Mg(2+) as a cofactor.

It localises to the virion. It carries out the reaction RNA(n) + a ribonucleoside 5'-triphosphate = RNA(n+1) + diphosphate. RNA-directed RNA polymerase that is involved in both transcription and genome replication. Together with VP3 capping enzyme, forms an enzyme complex positioned near the channels situated at each of the five-fold vertices of the core. Following infection, the outermost layer of the virus is lost, leaving a double-layered particle (DLP) made up of the core and VP6 shell. VP1 then catalyzes the transcription of fully conservative plus-strand genomic RNAs that are extruded through the DLP's channels into the cytoplasm where they function as mRNAs for translation of viral proteins. One copy of each of the viral (+)RNAs is also recruited during core assembly, together with newly synthesized polymerase complexes and VP2. The polymerase of these novo-formed particles catalyzes the synthesis of complementary minus-strands leading to dsDNA formation. To do so, the polymerase specifically recognizes conserved 3' sequence(s) in plus-strand RNA templates. Once dsRNA synthesis is complete, the polymerase switches to the transcriptional mode, thus providing secondary transcription. The protein is RNA-directed RNA polymerase of Rotavirus C (strain RVC/Pig/United States/Cowden/1980) (RV-C).